The chain runs to 95 residues: Cell division topological specificity factor (95 aa).

Belongs to the MinE family.

In terms of biological role, prevents the cell division inhibition by proteins MinC and MinD at internal division sites while permitting inhibition at polar sites. This ensures cell division at the proper site by restricting the formation of a division septum at the midpoint of the long axis of the cell. In Methylorubrum extorquens (strain PA1) (Methylobacterium extorquens), this protein is Cell division topological specificity factor.